Consider the following 201-residue polypeptide: UPF0301 protein RHE_CH00966 (201 aa).

It belongs to the UPF0301 (AlgH) family.

This chain is UPF0301 protein RHE_CH00966, found in Rhizobium etli (strain ATCC 51251 / DSM 11541 / JCM 21823 / NBRC 15573 / CFN 42).